The primary structure comprises 244 residues: UL16-binding protein 1 (244 aa).

The first 25 residues, M1–A25, serve as a signal peptide directing secretion. The tract at residues G26–E117 is MHC class I alpha-1 like. C50 and C66 are joined by a disulfide. N82 is a glycosylation site (N-linked (GlcNAc...) asparagine). The interval P118–T208 is MHC class I alpha-2 like. C127 and C190 are disulfide-bonded. G216 carries the GPI-anchor amidated glycine lipid modification. Positions T217 to R244 are cleaved as a propeptide — removed in mature form.

Belongs to the MHC class I family. In terms of assembly, interacts with KLRK1/NKG2D. Does not bind to beta2-microglobulin. (Microbial infection) In CMV-infected cells, interacts with the viral glycoprotein UL16; this interaction causes ULBP1 retention in the endoplasmic reticulum and cis-Golgi and prevents binding to and activation of KLRK1/NKG2D, providing CMV with an immune evasion mechanism. As to expression, expressed in T-cells, B-cells, erythroleukemia cell lines and in a wide range of tissues including heart, brain, lung, liver, testis, lymph node, thymus, tonsil and bone marrow. Also found in fetal heart, brain, lung and liver.

It localises to the cell membrane. It is found in the endoplasmic reticulum. Binds and activates the KLRK1/NKG2D receptor, mediating natural killer cell cytotoxicity. This Homo sapiens (Human) protein is UL16-binding protein 1 (ULBP1).